Consider the following 69-residue polypeptide: Sec-independent protein translocase protein TatA (69 aa).

A helical transmembrane segment spans residues 1-21 (MFGLGGQELVLILLIILLLFG). A disordered region spans residues 48 to 69 (EELNKAVDDTPEKEKKSSSEKS).

It belongs to the TatA/E family. Forms a complex with TatC.

It is found in the cell inner membrane. Part of the twin-arginine translocation (Tat) system that transports large folded proteins containing a characteristic twin-arginine motif in their signal peptide across membranes. TatA could form the protein-conducting channel of the Tat system. The chain is Sec-independent protein translocase protein TatA from Chlorobium phaeobacteroides (strain BS1).